Here is a 661-residue protein sequence, read N- to C-terminus: Threonine--tRNA ligase (661 aa).

The region spanning 1–64 is the TGS domain; the sequence is MSHSVSLTFP…ADGKIEIVTR (64 aa). The tract at residues 245–547 is catalytic; that stretch reads DHRRLGREMD…LLENYAGHMP (303 aa). The Zn(2+) site is built by Cys341, His392, and His524.

The protein belongs to the class-II aminoacyl-tRNA synthetase family. Homodimer. Requires Zn(2+) as cofactor.

The protein localises to the cytoplasm. It carries out the reaction tRNA(Thr) + L-threonine + ATP = L-threonyl-tRNA(Thr) + AMP + diphosphate + H(+). In terms of biological role, catalyzes the attachment of threonine to tRNA(Thr) in a two-step reaction: L-threonine is first activated by ATP to form Thr-AMP and then transferred to the acceptor end of tRNA(Thr). Also edits incorrectly charged L-seryl-tRNA(Thr). This is Threonine--tRNA ligase from Sinorhizobium fredii (strain NBRC 101917 / NGR234).